We begin with the raw amino-acid sequence, 208 residues long: NAD(P)H dehydrogenase (quinone) (208 aa).

Residues 4–199 (VNVIFHSIHG…AMARYQGRHV (196 aa)) enclose the Flavodoxin-like domain. FMN-binding positions include 10–15 (SIHGHT) and 87–89 (TRY). Trp107 provides a ligand contact to substrate. FMN-binding positions include 122 to 128 (SSGTQHG) and His143.

The protein belongs to the WrbA family. The cofactor is FMN.

It carries out the reaction a quinone + NADH + H(+) = a quinol + NAD(+). The enzyme catalyses a quinone + NADPH + H(+) = a quinol + NADP(+). In Methanosarcina barkeri (strain Fusaro / DSM 804), this protein is NAD(P)H dehydrogenase (quinone).